Consider the following 253-residue polypeptide: Ribonuclease HII (253 aa).

Residues 70-253 enclose the RNase H type-2 domain; it reads NLIAGIDEVG…KSFEPIKSML (184 aa). A divalent metal cation-binding residues include D76, E77, and D168.

Belongs to the RNase HII family. It depends on Mn(2+) as a cofactor. The cofactor is Mg(2+).

It localises to the cytoplasm. The enzyme catalyses Endonucleolytic cleavage to 5'-phosphomonoester.. Its function is as follows. Endonuclease that specifically degrades the RNA of RNA-DNA hybrids. This is Ribonuclease HII from Streptococcus agalactiae serotype Ia (strain ATCC 27591 / A909 / CDC SS700).